Reading from the N-terminus, the 1439-residue chain is METQVIDTVNEFLKVDSLDEAFVSVIVFKPNTEQERATRFANDLVTAFGNVAQENREQVLRLYLLRAAGASGYHIKVLMAALVKLVDAHVITARMLCDKVLMCEKLDFEHRTFWIESFRLIKRVIVQVDYKGVREIMKVCRDKAQWFPLNVNVTYMPQLLAVEDILRFIFDRNNCLLPAYFIANEIMRPFPYHWKLNRLMTDFVEEFRTTAQMVSIIGHASMLPIVEHFGYADHMMNSWRLDHNTLKFNFKGSLPYEPELLEEQKPLLRYVLEQPYSREMVSQMLNLQKHQKQRYNALEEQLVNLIVQAMEMTEANDATAGSGFNSSDEQITPYEWMWLHLSSQLIYFVLFQFVSFMHIVLALHEKLSKLELRKGRDQLMWILLQFISGSIQKNPITNFLPVFRLFDLLYPELEPLKLPDINKSSMVRHMAPICVWIHLMKKARVENMNITRPLPIALKNHYDFLQHLVTANTMMNMTLGNDFRIILICNAYSTNQEYFGRPMGLLLDALNGTSKSPNGGQIPAVTFSVTVLDSLTVHSKMSLIHSFVTQMLKQAQSKGQVPAAALLETYARLLVYTEIESLGIKGFLSQLMPTVFKNHAWAMLHTLMEMFSYRLHHVPTHYRVQLLSLLHSLSSVPQTNKMQLNLCFESTALRLITSIGSAEFQPQFSRYFNDKSPGAVASNESEELNRVLILTLARSMHVHGGGDEMQGWCKDFLSNIIQHTPHSWPMHSLACFPPALNEYFTQNNQPPENKQQLKKAVEEEYRTWTSMTNENDIIAHFLRPTTNPLFLCLLFKIIWETENISPVAYKILEGISARALSTHLRKFCDYLVAEVASSSDGRDFIHKCVDTINNMIWKFNVVTIDRVVLCLALRTHEGNEAQVCFLIIQLLLLKASELRNRVQEFCKDNNPDHWKQSNWQDKHLSFHQKYPEKFALDESASQIPLPVYFSNVCLRFLPVLDVVVHRFIELTITNVHQILGFILDHLSILYKFHDRPITYLYNTLHYYERILRDRPALKKKLVGAITSAFSEIRPPNWSVSEPYKVYLQSQDSLWTPELSYYMSLIRRLADTISGKNVFYSTDWRFNEFPNAPTHALYVTCVELLGLPVAPPLVASNLIDVIVSGYAVIPQKDIHSYINAVGIVLAALPEPYWSGIYDRLQDMLNTPNMLNWTYRFNAFELFNFKTVREAMLEKTYAVVLAVAHSVFHHMGAFKLAAMTRYLKEKLKPCVRTEQQLLYLCHVFGPFLQRIELEKPNAVAGIAVLLYEILEIVDKHHGPKPLQYMDQICDFLYHIKYIHVGNIIKNESEAIIKRLRPLLQMRLRFITHLNLEDIHTEKINDNTSNNAITSQTQSPMQTQHQQQPQQPHQQQQQQQQQQQQQQQQQQQQQQMQQQQINAVQTTSVPLGSGGNLQQQQQINQQQQMYMQHMQQHQHMQNMRHN.

A coiled-coil region spans residues 282-318 (SQMLNLQKHQKQRYNALEEQLVNLIVQAMEMTEANDA). The segment at 358–625 (HIVLALHEKL…HHVPTHYRVQ (268 aa)) is interaction with Hsf. Disordered stretches follow at residues 1338-1372 (NDNT…QQQQ) and 1401-1439 (SVPL…MRHN). Composition is skewed to low complexity over residues 1348–1372 (SQTQ…QQQQ) and 1411–1439 (QQQQ…MRHN).

Belongs to the Mediator complex subunit 23 family. Component of the Mediator complex. Interacts with Hsf.

The protein localises to the nucleus. In terms of biological role, component of the Mediator complex, a coactivator involved in the regulated transcription of nearly all RNA polymerase II-dependent genes. Mediator functions as a bridge to convey information from gene-specific regulatory proteins to the basal RNA polymerase II transcription machinery. Mediator is recruited to promoters by direct interactions with regulatory proteins and serves as a scaffold for the assembly of a functional preinitiation complex with RNA polymerase II and the general transcription factors. Required for transcriptional activation in response to heat shock. This is Mediator of RNA polymerase II transcription subunit 23 (MED23) from Drosophila melanogaster (Fruit fly).